The primary structure comprises 266 residues: Thiazole synthase (266 aa).

Lysine 95 functions as the Schiff-base intermediate with DXP in the catalytic mechanism. Residues glycine 156, 182 to 183 (AG), and 204 to 205 (NT) each bind 1-deoxy-D-xylulose 5-phosphate.

Belongs to the ThiG family. As to quaternary structure, homotetramer. Forms heterodimers with either ThiH or ThiS.

Its subcellular location is the cytoplasm. It carries out the reaction [ThiS sulfur-carrier protein]-C-terminal-Gly-aminoethanethioate + 2-iminoacetate + 1-deoxy-D-xylulose 5-phosphate = [ThiS sulfur-carrier protein]-C-terminal Gly-Gly + 2-[(2R,5Z)-2-carboxy-4-methylthiazol-5(2H)-ylidene]ethyl phosphate + 2 H2O + H(+). Its pathway is cofactor biosynthesis; thiamine diphosphate biosynthesis. Functionally, catalyzes the rearrangement of 1-deoxy-D-xylulose 5-phosphate (DXP) to produce the thiazole phosphate moiety of thiamine. Sulfur is provided by the thiocarboxylate moiety of the carrier protein ThiS. In vitro, sulfur can be provided by H(2)S. The chain is Thiazole synthase from Shewanella denitrificans (strain OS217 / ATCC BAA-1090 / DSM 15013).